A 908-amino-acid polypeptide reads, in one-letter code: Mycobactin import ATP-binding/permease protein IrtA (908 aa).

Topologically, residues 1-329 (MARGFQGVML…SRLLAPLKKP (329 aa)) are cytoplasmic. Residues 15–124 (ARDHQATVVD…MGSRGFSVPE (110 aa)) enclose the FAD-binding FR-type domain. Residues 16 to 245 (RDHQATVVDK…AQAYWTEGRA (230 aa)) are siderophore interaction domain. FAD is bound by residues 70–73 (RAYT), 87–91 (DMVLH), 97–98 (AS), and 241–243 (TEG). A disordered region spans residues 245–311 (AMGSSRGETS…GAAQPRTPVR (67 aa)). The segment covering 253–309 (TSTPAKPAAKTAPAKAAAKPAAASGAGTPEHAAAPAAATTGAPQAAPAPGAAQPRTP) has biased composition (low complexity). Residues 330–350 (LIVSGVLQALITLIELAPFVL) traverse the membrane as a helical segment. Residues 331–613 (IVSGVLQALI…IGYGLSGIQT (283 aa)) enclose the ABC transmembrane type-1 domain. Residues 351-371 (LVELARLLLGGAEAERLWTLG) are Periplasmic-facing. The helical transmembrane segment at 372–392 (LTAVSLIGLGAVLAAAMTLWL) threads the bilayer. Over 393-444 (HRVDARFAHELRGRLLTKLSRLPLGWFTRRGSASTKQLVQDDTLALHYLITH) the chain is Cytoplasmic. The helical transmembrane segment at 445-465 (AIPDAVAAVVAPVAVLVYLFV) threads the bilayer. Residues 466–469 (ADWR) are Periplasmic-facing. A helical membrane pass occupies residues 470–490 (VALVLFIPVLVYLVLMSVMTI). Over 491-557 (QSGSKIAQAP…PFVGKKTLMD (67 aa)) the chain is Cytoplasmic. The helical transmembrane segment at 558–578 (LVTRPATFLWIILVAGVPLVV) threads the bilayer. Residues 579-586 (TGRMDPVN) are Periplasmic-facing. Residues 587-607 (LLPFLLLGTTFGARLLGIGYG) form a helical membrane-spanning segment. Over 608–908 (LSGIQTGMLA…VSADAVEVGR (301 aa)) the chain is Cytoplasmic. The region spanning 654 to 887 (VELDRVSFEY…GGRYRGLWDS (234 aa)) is the ABC transporter domain. 687–694 (GPSGSGKS) provides a ligand contact to ATP.

Belongs to the ABC transporter superfamily. Siderophore-Fe(3+) uptake transporter (SIUT) (TC 3.A.1.21) family. As to quaternary structure, forms a heterodimer with IrtB. FAD serves as cofactor.

Its subcellular location is the cell inner membrane. The ATPase activity of IrtAB is stimulated more than 38-fold in the presence of Fe-MBT, and more than 10-fold in the presence of Fe-cMBT. Part of the ABC transporter complex IrtAB involved in the import of iron-bound mycobactin (Fe-MBT) and carboxymycobactin (Fe-cMBT). Has a preference for Fe-MBT over Fe-cMBT. Mycobactins are then reduced by the siderophore interaction domain to facilitate iron release in the bacterial cell. Transmembrane domains (TMD) form a pore in the membrane and the ATP-binding domain (NBD) is responsible for energy generation. This is Mycobactin import ATP-binding/permease protein IrtA from Mycolicibacterium thermoresistibile (strain ATCC 19527 / DSM 44167 / CIP 105390 / JCM 6362 / NCTC 10409 / 316) (Mycobacterium thermoresistibile).